Consider the following 134-residue polypeptide: Arsenate reductase (134 aa).

Active-site nucleophile residues include cysteine 11, cysteine 83, and cysteine 90. Intrachain disulfides connect cysteine 11/cysteine 83 and cysteine 83/cysteine 90.

This sequence belongs to the low molecular weight phosphotyrosine protein phosphatase family. Thioredoxin-coupled ArsC subfamily.

The protein resides in the cytoplasm. It catalyses the reaction arsenate + [thioredoxin]-dithiol + H(+) = arsenite + [thioredoxin]-disulfide + H2O. Catalyzes the reduction of arsenate [As(V)] to arsenite [As(III)]. The protein is Arsenate reductase of Bacillus anthracis (strain A0248).